The following is a 216-amino-acid chain: Orotate phosphoribosyltransferase (216 aa).

Lys30 contributes to the 5-phospho-alpha-D-ribose 1-diphosphate binding site. An orotate-binding site is contributed by 38–39 (FF). Residues 75–76 (YK), Arg102, Lys103, Lys106, His108, and 128–136 (DDVITAGTA) each bind 5-phospho-alpha-D-ribose 1-diphosphate. Positions 132 and 160 each coordinate orotate.

This sequence belongs to the purine/pyrimidine phosphoribosyltransferase family. PyrE subfamily. As to quaternary structure, homodimer. It depends on Mg(2+) as a cofactor.

It carries out the reaction orotidine 5'-phosphate + diphosphate = orotate + 5-phospho-alpha-D-ribose 1-diphosphate. It participates in pyrimidine metabolism; UMP biosynthesis via de novo pathway; UMP from orotate: step 1/2. In terms of biological role, catalyzes the transfer of a ribosyl phosphate group from 5-phosphoribose 1-diphosphate to orotate, leading to the formation of orotidine monophosphate (OMP). The protein is Orotate phosphoribosyltransferase of Acinetobacter baumannii (strain AB307-0294).